A 467-amino-acid chain; its full sequence is Chromosomal replication initiator protein DnaA (467 aa).

Residues 1–74 (MSADVWSQGC…ESVLSDLAGK (74 aa)) are domain I, interacts with DnaA modulators. The interval 74-130 (KPVRLDLQLAAREAPPRPSSDAPRSNGHPQAAGQWLGAPSSSNAGAYTQASAPTPTH) is domain II. The interval 85-127 (REAPPRPSSDAPRSNGHPQAAGQWLGAPSSSNAGAYTQASAPT) is disordered. A compositionally biased stretch (polar residues) spans 112–127 (PSSSNAGAYTQASAPT). The segment at 131-347 (RLNTALTFDT…GALRKVLAYA (217 aa)) is domain III, AAA+ region. ATP is bound by residues glycine 175, glycine 177, lysine 178, and threonine 179. The tract at residues 348-467 (RFSQKDINIA…LHVLEQTLKG (120 aa)) is domain IV, binds dsDNA.

The protein belongs to the DnaA family. As to quaternary structure, oligomerizes as a right-handed, spiral filament on DNA at oriC.

Its subcellular location is the cytoplasm. In terms of biological role, plays an essential role in the initiation and regulation of chromosomal replication. ATP-DnaA binds to the origin of replication (oriC) to initiate formation of the DNA replication initiation complex once per cell cycle. Binds the DnaA box (a 9 base pair repeat at the origin) and separates the double-stranded (ds)DNA. Forms a right-handed helical filament on oriC DNA; dsDNA binds to the exterior of the filament while single-stranded (ss)DNA is stabiized in the filament's interior. The ATP-DnaA-oriC complex binds and stabilizes one strand of the AT-rich DNA unwinding element (DUE), permitting loading of DNA polymerase. After initiation quickly degrades to an ADP-DnaA complex that is not apt for DNA replication. Binds acidic phospholipids. This Methylibium petroleiphilum (strain ATCC BAA-1232 / LMG 22953 / PM1) protein is Chromosomal replication initiator protein DnaA.